A 460-amino-acid chain; its full sequence is Phosphomethylpyrimidine synthase (460 aa).

Substrate contacts are provided by residues N80, M109, Y139, H175, 195 to 197, 236 to 239, and E275; these read SRG and DSLR. H279 is a binding site for Zn(2+). Y302 is a binding site for substrate. H343 is a binding site for Zn(2+). Residues C423, C426, and C431 each contribute to the [4Fe-4S] cluster site.

Belongs to the ThiC family. It depends on [4Fe-4S] cluster as a cofactor.

It catalyses the reaction 5-amino-1-(5-phospho-beta-D-ribosyl)imidazole + S-adenosyl-L-methionine = 4-amino-2-methyl-5-(phosphooxymethyl)pyrimidine + CO + 5'-deoxyadenosine + formate + L-methionine + 3 H(+). The protein operates within cofactor biosynthesis; thiamine diphosphate biosynthesis. Catalyzes the synthesis of the hydroxymethylpyrimidine phosphate (HMP-P) moiety of thiamine from aminoimidazole ribotide (AIR) in a radical S-adenosyl-L-methionine (SAM)-dependent reaction. This Microcystis aeruginosa (strain NIES-843 / IAM M-2473) protein is Phosphomethylpyrimidine synthase.